We begin with the raw amino-acid sequence, 1473 residues long: Sulfite reductase [NADPH] subunit beta (1473 aa).

The 149-residue stretch at 728–876 (LTILFASDGG…AYNLWEPELW (149 aa)) folds into the Flavodoxin-like domain. Positions 1328, 1334, 1373, and 1377 each coordinate [4Fe-4S] cluster. Residue C1377 participates in siroheme binding.

It belongs to the nitrite and sulfite reductase 4Fe-4S domain family. As to quaternary structure, alpha(2)-beta(2). The alpha component is a flavoprotein, the beta component is a hemoprotein. The cofactor is siroheme. [4Fe-4S] cluster is required as a cofactor.

Its subcellular location is the cytoplasm. It carries out the reaction hydrogen sulfide + 3 NADP(+) + 3 H2O = sulfite + 3 NADPH + 4 H(+). It participates in sulfur metabolism; hydrogen sulfide biosynthesis; hydrogen sulfide from sulfite (NADPH route): step 1/1. Catalyzes the reduction of sulfite to sulfide, one of several activities required for the biosynthesis of L-cysteine from sulfate. The polypeptide is Sulfite reductase [NADPH] subunit beta (sir1) (Schizosaccharomyces pombe (strain 972 / ATCC 24843) (Fission yeast)).